Consider the following 291-residue polypeptide: Undecaprenyl-diphosphatase (291 aa).

The next 8 helical transmembrane spans lie at 1–21, 48–68, 102–122, 126–146, 162–182, 203–223, 231–251, and 267–287; these read MFIIELIKGIILGIVEGLTEF, SAFTFKIVIQLGSVFAAAWVF, LHVLVGMVPAGILGLLFDDFI, LFSVPTVMIGLFVGAIYMIIA, ISYFQAFVIGISQAVAMWPGF, SDFTFIMAVPIMLAASGLSLL, IADIPFYILGFLAAFTVGLIA, and FAIYRIVLVIFIAILYFGFGI.

This sequence belongs to the UppP family.

Its subcellular location is the cell membrane. It carries out the reaction di-trans,octa-cis-undecaprenyl diphosphate + H2O = di-trans,octa-cis-undecaprenyl phosphate + phosphate + H(+). Functionally, catalyzes the dephosphorylation of undecaprenyl diphosphate (UPP). Confers resistance to bacitracin. The polypeptide is Undecaprenyl-diphosphatase (Staphylococcus aureus (strain MRSA252)).